The sequence spans 952 residues: Isoleucine--tRNA ligase (952 aa).

The short motif at 58–68 is the 'HIGH' region element; sequence PYANGDIHIGH. E576 contributes to the L-isoleucyl-5'-AMP binding site. A 'KMSKS' region motif is present at residues 617–621; it reads KMSKS. Residue K620 coordinates ATP. Zn(2+) contacts are provided by C915, C918, C935, and C938.

The protein belongs to the class-I aminoacyl-tRNA synthetase family. IleS type 1 subfamily. In terms of assembly, monomer. Zn(2+) is required as a cofactor.

Its subcellular location is the cytoplasm. It carries out the reaction tRNA(Ile) + L-isoleucine + ATP = L-isoleucyl-tRNA(Ile) + AMP + diphosphate. Catalyzes the attachment of isoleucine to tRNA(Ile). As IleRS can inadvertently accommodate and process structurally similar amino acids such as valine, to avoid such errors it has two additional distinct tRNA(Ile)-dependent editing activities. One activity is designated as 'pretransfer' editing and involves the hydrolysis of activated Val-AMP. The other activity is designated 'posttransfer' editing and involves deacylation of mischarged Val-tRNA(Ile). The sequence is that of Isoleucine--tRNA ligase from Vibrio atlanticus (strain LGP32) (Vibrio splendidus (strain Mel32)).